The sequence spans 78 residues: Large ribosomal subunit protein bL28 (78 aa).

The protein belongs to the bacterial ribosomal protein bL28 family.

This chain is Large ribosomal subunit protein bL28, found in Acinetobacter baylyi (strain ATCC 33305 / BD413 / ADP1).